The primary structure comprises 598 residues: uncharacterized protein (598 aa).

The Mn(2+) site is built by Asp-397, Asp-408, Glu-506, and Glu-520.

It belongs to the peptidase M24B family. It depends on Mn(2+) as a cofactor.

This is an uncharacterized protein from Schizosaccharomyces pombe (strain 972 / ATCC 24843) (Fission yeast).